A 269-amino-acid chain; its full sequence is Thiazole synthase (269 aa).

The Schiff-base intermediate with DXP role is filled by lysine 95. 1-deoxy-D-xylulose 5-phosphate is bound by residues glycine 156, alanine 182–glycine 183, and asparagine 204–threonine 205.

Belongs to the ThiG family. Homotetramer. Forms heterodimers with either ThiH or ThiS.

Its subcellular location is the cytoplasm. It carries out the reaction [ThiS sulfur-carrier protein]-C-terminal-Gly-aminoethanethioate + 2-iminoacetate + 1-deoxy-D-xylulose 5-phosphate = [ThiS sulfur-carrier protein]-C-terminal Gly-Gly + 2-[(2R,5Z)-2-carboxy-4-methylthiazol-5(2H)-ylidene]ethyl phosphate + 2 H2O + H(+). Its pathway is cofactor biosynthesis; thiamine diphosphate biosynthesis. Its function is as follows. Catalyzes the rearrangement of 1-deoxy-D-xylulose 5-phosphate (DXP) to produce the thiazole phosphate moiety of thiamine. Sulfur is provided by the thiocarboxylate moiety of the carrier protein ThiS. In vitro, sulfur can be provided by H(2)S. This is Thiazole synthase from Shewanella frigidimarina (strain NCIMB 400).